The chain runs to 191 residues: MGKSCKVVVCGQASVGKTSILEQLLYGNHVVGSEMIETQEDIYVGSIETDRGVREQVRFYDTRGLRDGAELPRHCFSCTDGYVLVYSTDSRESFQRVELLKKEIDKSKDKKEVTIVVLGNKCDLQEQRRVDPDVAQHWAKSEKVKLWEVSVADRRSLLEPFVYLASKMTQPQSKSAFPLSRKNKGSGSLDG.

The interval 1–191 (MGKSCKVVVC…KNKGSGSLDG (191 aa)) is small GTPase-like. 11-18 (GQASVGKT) contributes to the GTP binding site. The short motif at 35-43 (MIETQEDIY) is the Effector region element. GTP-binding positions include 61–65 (DTRGL) and 120–123 (NKCD). The disordered stretch occupies residues 169–191 (TQPQSKSAFPLSRKNKGSGSLDG).

It belongs to the small GTPase superfamily. Ras family. KappaB-Ras subfamily. As to quaternary structure, interacts with both NF-kappa-B inhibitor alpha (NFKBIA) and beta (NFKBIB) in vitro. However, it probably only interacts with NFKBIB in vivo. Interacts with GFOD1. Widely expressed.

Its subcellular location is the cytoplasm. Its function is as follows. Atypical Ras-like protein that acts as a potent regulator of NF-kappa-B activity by preventing the degradation of NF-kappa-B inhibitor beta (NFKBIB) by most signals, explaining why NFKBIB is more resistant to degradation. May act by blocking phosphorylation of NFKBIB and nuclear localization of p65/RELA NF-kappa-B subunit. It is unclear whether it acts as a GTPase. Both GTP- and GDP-bound forms block phosphorylation of NFKBIB. The chain is NF-kappa-B inhibitor-interacting Ras-like protein 2 (NKIRAS2) from Homo sapiens (Human).